The primary structure comprises 282 residues: ATP phosphoribosyltransferase (282 aa).

It belongs to the ATP phosphoribosyltransferase family. Long subfamily. The cofactor is Mg(2+).

The protein localises to the cytoplasm. It catalyses the reaction 1-(5-phospho-beta-D-ribosyl)-ATP + diphosphate = 5-phospho-alpha-D-ribose 1-diphosphate + ATP. Its pathway is amino-acid biosynthesis; L-histidine biosynthesis; L-histidine from 5-phospho-alpha-D-ribose 1-diphosphate: step 1/9. With respect to regulation, feedback inhibited by histidine. Catalyzes the condensation of ATP and 5-phosphoribose 1-diphosphate to form N'-(5'-phosphoribosyl)-ATP (PR-ATP). Has a crucial role in the pathway because the rate of histidine biosynthesis seems to be controlled primarily by regulation of HisG enzymatic activity. The polypeptide is ATP phosphoribosyltransferase (Pyrobaculum calidifontis (strain DSM 21063 / JCM 11548 / VA1)).